The primary structure comprises 313 residues: Porphobilinogen deaminase (313 aa).

The residue at position 242 (Cys242) is an S-(dipyrrolylmethanemethyl)cysteine.

The protein belongs to the HMBS family. As to quaternary structure, monomer. Dipyrromethane is required as a cofactor.

It catalyses the reaction 4 porphobilinogen + H2O = hydroxymethylbilane + 4 NH4(+). It participates in porphyrin-containing compound metabolism; protoporphyrin-IX biosynthesis; coproporphyrinogen-III from 5-aminolevulinate: step 2/4. In terms of biological role, tetrapolymerization of the monopyrrole PBG into the hydroxymethylbilane pre-uroporphyrinogen in several discrete steps. This chain is Porphobilinogen deaminase, found in Pseudomonas fluorescens (strain ATCC BAA-477 / NRRL B-23932 / Pf-5).